The following is a 96-amino-acid chain: ATP synthase subunit c (96 aa).

Helical transmembrane passes span 9 to 29 (FIAC…GCGI) and 58 to 78 (IGLA…LILI).

Belongs to the ATPase C chain family. As to quaternary structure, F-type ATPases have 2 components, F(1) - the catalytic core - and F(0) - the membrane proton channel. F(1) has five subunits: alpha(3), beta(3), gamma(1), delta(1), epsilon(1). F(0) has three main subunits: a(1), b(2) and c(10-14). The alpha and beta chains form an alternating ring which encloses part of the gamma chain. F(1) is attached to F(0) by a central stalk formed by the gamma and epsilon chains, while a peripheral stalk is formed by the delta and b chains.

It localises to the cell inner membrane. Its function is as follows. F(1)F(0) ATP synthase produces ATP from ADP in the presence of a proton or sodium gradient. F-type ATPases consist of two structural domains, F(1) containing the extramembraneous catalytic core and F(0) containing the membrane proton channel, linked together by a central stalk and a peripheral stalk. During catalysis, ATP synthesis in the catalytic domain of F(1) is coupled via a rotary mechanism of the central stalk subunits to proton translocation. In terms of biological role, key component of the F(0) channel; it plays a direct role in translocation across the membrane. A homomeric c-ring of between 10-14 subunits forms the central stalk rotor element with the F(1) delta and epsilon subunits. The protein is ATP synthase subunit c of Desulfosudis oleivorans (strain DSM 6200 / JCM 39069 / Hxd3) (Desulfococcus oleovorans).